The primary structure comprises 101 residues: Small ribosomal subunit protein uS14 (101 aa).

This sequence belongs to the universal ribosomal protein uS14 family. Part of the 30S ribosomal subunit. Contacts proteins S3 and S10.

Its function is as follows. Binds 16S rRNA, required for the assembly of 30S particles and may also be responsible for determining the conformation of the 16S rRNA at the A site. This Novosphingobium aromaticivorans (strain ATCC 700278 / DSM 12444 / CCUG 56034 / CIP 105152 / NBRC 16084 / F199) protein is Small ribosomal subunit protein uS14.